Consider the following 649-residue polypeptide: MSHIIELPEMLANQIAAGEVIERPASVVKELVENAIDAGSSQIIIEIEEAGLKKIQITDNGHGIAHDEVELALRRHATSKIKNQADLFRIRTLGFRGEALPSIASVSVLTLLTAVDGASHGTKLVARGGEVEEVIPATSPVGTKVCVEDLFFNTPARLKYMKSQQAELSHIIDIVNRLGLAHPEISFSLISDGKEMTRTAGTGQLRQAIAGIYGLVSAKKMIEIENSDLDFEISGFVSLPELTRANRNYISLFINGRYIKNFLLNRAILDGFGSKLMVGRFPLAVIHIHIDPYLADVNVHPTKQEVRISKEKELMALVSEAIANSLKEQTLIPDALENLAKSTVRNREKVEQTILPLKENTLYYEKTEPSRPSQTEVADYQVELTDEGQDLTLFAKETLDRLTKPAKLHFAERKPANYDQLDHPELDLASIDKAYDKLEREEASSFPELEFFGQMHGTYLFAQGRDGLYIIDQHAAQERVKYEEYRESIGNVDQSQQQLLVPYIFEFPADDALCLKERMPLLEEVGVFLAEYGENQFILREHPIWMAEEEIESGIYEMCDMLLLTKEVSIKKYRAELAIMMSCKRSIKANHRIDDHSARQLLYQLSQCDNPYNCPHGRPVLVHFTKSDMEKMFRRIQENHTSLRELGKY.

The protein belongs to the DNA mismatch repair MutL/HexB family.

In terms of biological role, this protein is involved in the repair of mismatches in DNA. It is required for dam-dependent methyl-directed DNA mismatch repair. May act as a 'molecular matchmaker', a protein that promotes the formation of a stable complex between two or more DNA-binding proteins in an ATP-dependent manner without itself being part of a final effector complex. This chain is DNA mismatch repair protein MutL, found in Streptococcus pneumoniae (strain JJA).